Reading from the N-terminus, the 170-residue chain is UPF0316 protein CLK_3798 (170 aa).

Helical transmembrane passes span 1–21 (MLSY…LMTI) and 36–56 (IIGF…LSGI).

Belongs to the UPF0316 family.

The protein resides in the cell membrane. This Clostridium botulinum (strain Loch Maree / Type A3) protein is UPF0316 protein CLK_3798.